Consider the following 129-residue polypeptide: uncharacterized protein (129 aa).

Positions 84-98 are enriched in basic residues; the sequence is QKTVSKKYKSRKGRR. The tract at residues 84–129 is disordered; it reads QKTVSKKYKSRKGRRYTRERNISSEKNKTDKSHKVRVGKIQNINND. Over residues 99–115 the composition is skewed to basic and acidic residues; the sequence is YTRERNISSEKNKTDKS.

This is an uncharacterized protein from Acanthamoeba polyphaga mimivirus (APMV).